We begin with the raw amino-acid sequence, 53 residues long: Unknown protein from 2D-PAGE of needles (53 aa).

The sequence is that of Unknown protein from 2D-PAGE of needles from Pinus pinaster (Maritime pine).